Consider the following 537-residue polypeptide: CWF19-like protein 1 (537 aa).

The tract at residues 297–323 (KQGRKRPSTGRDTRPPHAKQPRKPPQP) is disordered.

The protein belongs to the CWF19 family.

The polypeptide is CWF19-like protein 1 (Cwf19l1) (Mus musculus (Mouse)).